Consider the following 129-residue polypeptide: Glycine cleavage system H protein (129 aa).

One can recognise a Lipoyl-binding domain in the interval 24–106 (SYTVGISEHA…YGDGWFFRIM (83 aa)). Residue Lys65 is modified to N6-lipoyllysine.

Belongs to the GcvH family. As to quaternary structure, the glycine cleavage system is composed of four proteins: P, T, L and H. (R)-lipoate is required as a cofactor.

Functionally, the glycine cleavage system catalyzes the degradation of glycine. The H protein shuttles the methylamine group of glycine from the P protein to the T protein. This is Glycine cleavage system H protein from Shewanella loihica (strain ATCC BAA-1088 / PV-4).